A 367-amino-acid polypeptide reads, in one-letter code: Uroporphyrinogen decarboxylase (367 aa).

At Met-1 the chain carries N-acetylmethionine. Coproporphyrinogen I is bound by residues Arg-37, Ala-39, Arg-41, Arg-50, Asp-86, Tyr-164, Ser-219, and His-339. Residues Arg-37, Ala-39, and Arg-41 each coordinate coproporphyrinogen III. The coproporphyrinogen III site is built by Asp-86, Tyr-164, Ser-219, and His-339.

Belongs to the uroporphyrinogen decarboxylase family. As to quaternary structure, homodimer.

The protein resides in the cytoplasm. It localises to the cytosol. It carries out the reaction uroporphyrinogen III + 4 H(+) = coproporphyrinogen III + 4 CO2. The enzyme catalyses uroporphyrinogen I + 4 H(+) = coproporphyrinogen I + 4 CO2. Its pathway is porphyrin-containing compound metabolism; protoporphyrin-IX biosynthesis; coproporphyrinogen-III from 5-aminolevulinate: step 4/4. Its function is as follows. Catalyzes the sequential decarboxylation of the four acetate side chains of uroporphyrinogen to form coproporphyrinogen and participates in the fifth step in the heme biosynthetic pathway. Isomer I or isomer III of uroporphyrinogen may serve as substrate, but only coproporphyrinogen III can ultimately be converted to heme. In vitro also decarboxylates pentacarboxylate porphyrinogen I. This is Uroporphyrinogen decarboxylase from Mus musculus (Mouse).